A 1332-amino-acid polypeptide reads, in one-letter code: DNA-directed RNA polymerase subunit beta'' (1332 aa).

Cysteine 220, cysteine 291, cysteine 298, and cysteine 301 together coordinate Zn(2+).

The protein belongs to the RNA polymerase beta' chain family. RpoC2 subfamily. As to quaternary structure, in plastids the minimal PEP RNA polymerase catalytic core is composed of four subunits: alpha, beta, beta', and beta''. When a (nuclear-encoded) sigma factor is associated with the core the holoenzyme is formed, which can initiate transcription. Requires Zn(2+) as cofactor.

It is found in the plastid. It localises to the chloroplast. The enzyme catalyses RNA(n) + a ribonucleoside 5'-triphosphate = RNA(n+1) + diphosphate. Functionally, DNA-dependent RNA polymerase catalyzes the transcription of DNA into RNA using the four ribonucleoside triphosphates as substrates. The polypeptide is DNA-directed RNA polymerase subunit beta'' (Lotus japonicus (Lotus corniculatus var. japonicus)).